The primary structure comprises 145 residues: uncharacterized protein (145 aa).

The helical transmembrane segment at 63–83 threads the bilayer; that stretch reads FLCLPLFLSFLVANLILWLSF.

The protein localises to the mitochondrion membrane. This is an uncharacterized protein from Arabidopsis thaliana (Mouse-ear cress).